Reading from the N-terminus, the 345-residue chain is tRNA dimethylallyltransferase (345 aa).

9 to 16 (GPTASGKS) lines the ATP pocket. 11 to 16 (TASGKS) serves as a coordination point for substrate. 2 interaction with substrate tRNA regions span residues 34 to 37 (DSMQ) and 195 to 199 (QRMIR).

This sequence belongs to the IPP transferase family. Monomer. Mg(2+) serves as cofactor.

The enzyme catalyses adenosine(37) in tRNA + dimethylallyl diphosphate = N(6)-dimethylallyladenosine(37) in tRNA + diphosphate. Catalyzes the transfer of a dimethylallyl group onto the adenine at position 37 in tRNAs that read codons beginning with uridine, leading to the formation of N6-(dimethylallyl)adenosine (i(6)A). The sequence is that of tRNA dimethylallyltransferase from Orientia tsutsugamushi (strain Boryong) (Rickettsia tsutsugamushi).